Here is a 304-residue protein sequence, read N- to C-terminus: Protoheme IX farnesyltransferase 1 (304 aa).

Transmembrane regions (helical) follow at residues 24–44 (VVVL…KAPL), 47–67 (FVPW…AGAA), 99–119 (MALG…LAFT), 122–142 (LTAW…TGFL), 150–170 (IVIG…AITG), 176–196 (PLLL…ALCI), 228–248 (LVLF…LVYL), and 280–300 (YSIV…YLPL).

The protein belongs to the UbiA prenyltransferase family. Protoheme IX farnesyltransferase subfamily.

It localises to the cell inner membrane. It catalyses the reaction heme b + (2E,6E)-farnesyl diphosphate + H2O = Fe(II)-heme o + diphosphate. It participates in porphyrin-containing compound metabolism; heme O biosynthesis; heme O from protoheme: step 1/1. Its function is as follows. Converts heme B (protoheme IX) to heme O by substitution of the vinyl group on carbon 2 of heme B porphyrin ring with a hydroxyethyl farnesyl side group. The chain is Protoheme IX farnesyltransferase 1 from Pseudomonas paraeruginosa (strain DSM 24068 / PA7) (Pseudomonas aeruginosa (strain PA7)).